The sequence spans 541 residues: uncharacterized protein (541 aa).

Its subcellular location is the virion. This is an uncharacterized protein from Acanthamoeba polyphaga mimivirus (APMV).